A 523-amino-acid chain; its full sequence is Succinate-semialdehyde dehydrogenase, mitochondrial (523 aa).

Residues 1 to 35 constitute a mitochondrion transit peptide; sequence MATCFLLRNFCAARPALRPPGRLLREPAGAQRRSY. Lysine 114 carries the N6-acetyllysine; alternate modification. At lysine 114 the chain carries N6-succinyllysine; alternate. 2 positions are modified to N6-succinyllysine: lysine 123 and lysine 172. NAD(+)-binding positions include arginine 201 and 216 to 219; that span reads KPAE. Residue arginine 201 coordinates substrate. Lysine 253 carries the post-translational modification N6-acetyllysine; alternate. Lysine 253 carries the post-translational modification N6-succinyllysine; alternate. 272 to 277 lines the NAD(+) pocket; sequence GSTATG. The active-site Proton acceptor is the glutamate 294. Residue arginine 322 coordinates substrate. The Nucleophile role is filled by cysteine 328. A disulfide bridge links cysteine 328 with cysteine 330. The residue at position 353 (lysine 353) is an N6-acetyllysine. N6-succinyllysine is present on lysine 390. At lysine 399 the chain carries N6-acetyllysine. Residue serine 486 coordinates substrate. Residue serine 487 is modified to Phosphoserine.

This sequence belongs to the aldehyde dehydrogenase family. Homotetramer. In terms of tissue distribution, brain, pancreas, heart, liver, skeletal muscle, kidney. Lower in spleen, lung, kidney and testis.

The protein resides in the mitochondrion. The catalysed reaction is succinate semialdehyde + NAD(+) + H2O = succinate + NADH + 2 H(+). It participates in amino-acid degradation; 4-aminobutanoate degradation. With respect to regulation, redox-regulated. Inhibited under oxydizing conditions. Functionally, catalyzes one step in the degradation of the inhibitory neurotransmitter gamma-aminobutyric acid (GABA). This chain is Succinate-semialdehyde dehydrogenase, mitochondrial (Aldh5a1), found in Rattus norvegicus (Rat).